The sequence spans 342 residues: RNA 3'-terminal phosphate cyclase (342 aa).

ATP contacts are provided by residues Q100 and 283 to 287 (FLGDQ). Residue H307 is the Tele-AMP-histidine intermediate of the active site.

This sequence belongs to the RNA 3'-terminal cyclase family. Type 1 subfamily.

Its subcellular location is the cytoplasm. It catalyses the reaction a 3'-end 3'-phospho-ribonucleotide-RNA + ATP = a 3'-end 2',3'-cyclophospho-ribonucleotide-RNA + AMP + diphosphate. Its function is as follows. Catalyzes the conversion of 3'-phosphate to a 2',3'-cyclic phosphodiester at the end of RNA. The mechanism of action of the enzyme occurs in 3 steps: (A) adenylation of the enzyme by ATP; (B) transfer of adenylate to an RNA-N3'P to produce RNA-N3'PP5'A; (C) and attack of the adjacent 2'-hydroxyl on the 3'-phosphorus in the diester linkage to produce the cyclic end product. The biological role of this enzyme is unknown but it is likely to function in some aspects of cellular RNA processing. The protein is RNA 3'-terminal phosphate cyclase (rtcA) of Pyrococcus abyssi (strain GE5 / Orsay).